The sequence spans 436 residues: Aminopeptidase C (436 aa).

Active-site residues include Cys68, His356, and Asn378.

This sequence belongs to the peptidase C1 family. As to quaternary structure, homohexamer.

The enzyme catalyses Inactivates bleomycin B2 (a cytotoxic glycometallopeptide) by hydrolysis of a carboxyamide bond of beta-aminoalanine, but also shows general aminopeptidase activity. The specificity varies somewhat with source, but amino acid arylamides of Met, Leu and Ala are preferred.. Functionally, hydrolyzes naphthylamide-substituted amino acids as well as di- and tripeptides in which the half-cystine residue is involved in a disulfide loop, notably in oxytocin and vasopressin. Also has a bleomycin hydrolase activity. In Lactococcus lactis subsp. cremoris (Streptococcus cremoris), this protein is Aminopeptidase C (pepC).